Consider the following 241-residue polypeptide: Venom nerve growth factor 2 (241 aa).

The first 18 residues, 1–18 (MSMLCYTLITAFLIGIWA), serve as a signal peptide directing secretion. Positions 19 to 125 (APKSEDNVPL…SLNRNIRAKR (107 aa)) are excised as a propeptide. Residues 47-67 (GLKTSRNTDQRHPAPQKAEDQ) form a disordered region. 3 disulfide bridges follow: Cys139-Cys203, Cys181-Cys231, and Cys191-Cys233.

The protein belongs to the NGF-beta family. As to quaternary structure, homodimer; non-covalently linked. As to expression, expressed by the venom gland.

It localises to the secreted. Nerve growth factor is important for the development and maintenance of the sympathetic and sensory nervous systems. It stimulates division and differentiation of sympathetic and embryonic sensory neurons as well as basal forebrain cholinergic neurons in the brain. Its relevance in the snake venom is not clear. However, it has been shown to inhibit metalloproteinase-dependent proteolysis of platelet glycoprotein Ib alpha, suggesting a metalloproteinase inhibition to prevent metalloprotease autodigestion and/or protection against prey proteases. Binds a lipid between the two protein chains in the homodimer. The lipid-bound form promotes histamine relase from mouse mast cells, contrary to the lipid-free form. This is Venom nerve growth factor 2 from Naja sputatrix (Malayan spitting cobra).